The following is a 466-amino-acid chain: 3-isopropylmalate dehydratase large subunit (466 aa).

Residues Cys347, Cys407, and Cys410 each coordinate [4Fe-4S] cluster.

The protein belongs to the aconitase/IPM isomerase family. LeuC type 1 subfamily. Heterodimer of LeuC and LeuD. The cofactor is [4Fe-4S] cluster.

It catalyses the reaction (2R,3S)-3-isopropylmalate = (2S)-2-isopropylmalate. The protein operates within amino-acid biosynthesis; L-leucine biosynthesis; L-leucine from 3-methyl-2-oxobutanoate: step 2/4. Catalyzes the isomerization between 2-isopropylmalate and 3-isopropylmalate, via the formation of 2-isopropylmaleate. The sequence is that of 3-isopropylmalate dehydratase large subunit from Shewanella loihica (strain ATCC BAA-1088 / PV-4).